The primary structure comprises 420 residues: 3-isopropylmalate dehydratase large subunit (420 aa).

Residues Cys300, Cys360, and Cys363 each coordinate [4Fe-4S] cluster.

This sequence belongs to the aconitase/IPM isomerase family. LeuC type 2 subfamily. In terms of assembly, heterodimer of LeuC and LeuD. The cofactor is [4Fe-4S] cluster.

The catalysed reaction is (2R,3S)-3-isopropylmalate = (2S)-2-isopropylmalate. It participates in amino-acid biosynthesis; L-leucine biosynthesis; L-leucine from 3-methyl-2-oxobutanoate: step 2/4. Catalyzes the isomerization between 2-isopropylmalate and 3-isopropylmalate, via the formation of 2-isopropylmaleate. The chain is 3-isopropylmalate dehydratase large subunit from Halothermothrix orenii (strain H 168 / OCM 544 / DSM 9562).